A 72-amino-acid polypeptide reads, in one-letter code: Translation initiation factor IF-1 2 (72 aa).

In terms of domain architecture, S1-like spans 1-72 (MAKEDTIQMQ…SRARIVFRAK (72 aa)).

This sequence belongs to the IF-1 family. Component of the 30S ribosomal translation pre-initiation complex which assembles on the 30S ribosome in the order IF-2 and IF-3, IF-1 and N-formylmethionyl-tRNA(fMet); mRNA recruitment can occur at any time during PIC assembly.

It localises to the cytoplasm. Functionally, one of the essential components for the initiation of protein synthesis. Stabilizes the binding of IF-2 and IF-3 on the 30S subunit to which N-formylmethionyl-tRNA(fMet) subsequently binds. Helps modulate mRNA selection, yielding the 30S pre-initiation complex (PIC). Upon addition of the 50S ribosomal subunit IF-1, IF-2 and IF-3 are released leaving the mature 70S translation initiation complex. This is Translation initiation factor IF-1 2 from Chromobacterium violaceum (strain ATCC 12472 / DSM 30191 / JCM 1249 / CCUG 213 / NBRC 12614 / NCIMB 9131 / NCTC 9757 / MK).